We begin with the raw amino-acid sequence, 504 residues long: MILSLLFLFVITLYFLIPSRISKINKNIPGPIGYPIVGNLFQINKNVVKSIDGFYKEFGPVYRLRMGNIETVVLTGIDTLEESFLFNKHSFVDRFVKKSRKINNGLDIIHSNGEYWKILKTIFQTQMTPRKIKSYQFEIQSQVDLMAEQLYKSKNNDNIVTNINENMKFMLFNIMSILIFGKQSIYCNNTNNINNKDDDDVDKEKKHIIFSIGRFFKTSGSLFYSDFIPILLPFDLINLSRNNFFKDFQVLTNFVSKNVNQQLSKLNDNNNNNKEKEGEERKSIVEAYLENYLNGEIKFESVLSSCTNLLLAGTDSSANTLSFLLVSLINNPEIQEKVYNEIITNLKNDEISINDRFKCPYTCAVIKETHRLYSIAPLSEPHYCSNDVEIKGFKIAKGTQIIQNIYSSSRSEQYWDKPLSFIPERFIDNANIKEKNKNIVSFGLGLRGCIGKSFAEYMIFLTVVRLIKNYKFSNPSPNQPLKEIGEYGLVMNCANYNAKIEKRK.

Residues Met-1–Ile-21 traverse the membrane as a helical segment. Cys-449 contributes to the heme binding site.

The protein belongs to the cytochrome P450 family. The cofactor is heme.

It localises to the membrane. The protein is Probable cytochrome P450 513F1 (cyp513F1) of Dictyostelium discoideum (Social amoeba).